Here is a 335-residue protein sequence, read N- to C-terminus: MSSFITKTVLAALVAAAGVRAHGHVESITVGGTEYEGLNPGAAAFENPRKELAAWFATNTDNGFVEPSAFGDADIICHRGAENAVKSAKVKAGEKITIKWDTWPESHKGPVIDYLASCGSAGCAKVDKTSLKFFKIAEAGMTSGGKFASDDLIAAGNTWEVTVPTSIKAGNYVLRHEIIALHAAGQENGAQNYPQCFNLEVESDGTAEPAGVAGTSLYTASEKGIVFDLYNNPTSYPIPGPKMNIAGGSSGAAPSTPATPTTGSGSDTPSNTAAPVESAPAESAAPVESAPAAGNGNQNNGGASPVETEAPATPQPTKTGCKAKKARRHARDMMN.

The first 21 residues, 1–21, serve as a signal peptide directing secretion; that stretch reads MSSFITKTVLAALVAAAGVRA. 2 residues coordinate Cu(2+): His22 and His107. Cys77 and Cys196 are joined by a disulfide. O2 contacts are provided by His182 and Gln191. Tyr193 is a Cu(2+) binding site. Residues 241 to 335 are disordered; sequence PKMNIAGGSS…ARRHARDMMN (95 aa). Over residues 251–303 the composition is skewed to low complexity; the sequence is GAAPSTPATPTTGSGSDTPSNTAAPVESAPAESAAPVESAPAAGNGNQNNGGA. A compositionally biased stretch (basic residues) spans 321-335; that stretch reads CKAKKARRHARDMMN.

The protein belongs to the polysaccharide monooxygenase AA9 family. The cofactor is Cu(2+).

Its subcellular location is the secreted. The catalysed reaction is [(1-&gt;4)-beta-D-glucosyl]n+m + reduced acceptor + O2 = 4-dehydro-beta-D-glucosyl-[(1-&gt;4)-beta-D-glucosyl]n-1 + [(1-&gt;4)-beta-D-glucosyl]m + acceptor + H2O.. Its function is as follows. Lytic polysaccharide monooxygenase (LPMO) that depolymerizes crystalline and amorphous polysaccharides via the oxidation of scissile alpha- or beta-(1-4)-glycosidic bonds, yielding C1 or C4 oxidation products. Catalysis by LPMOs requires the reduction of the active-site copper from Cu(II) to Cu(I) by a reducing agent and H(2)O(2) or O(2) as a cosubstrate. Is capable of cleaving cellulose, but not chitin. Is also active on tamarind xyloglucan and longer xyloglucan oligosaccharides. Has no activity toward shorter cellooligosaccharides (Glc3-6), as well as toward the xyloglucan-heptamer, birchwood xylan, wheat arabinoxylan, konjac glucomannan, ivory nut mannan, beta-glucan from barley, lichenan from Icelandic moss, starch, and spruce galactoglucomannan. Has unprecedented broad specificity on xyloglucan, cleaving any glycosidicbond in theb-glucan main chain, regardless of xylosyl substitutions. When incubated with a mixture of xyloglucan and cellulose, efficiently attacks the xyloglucan, whereas cellulose conversion is inhibited, suggesting that removal of hemicellulose may be the true function of this LPMO during biomass conversion. This Gibberella zeae (strain ATCC MYA-4620 / CBS 123657 / FGSC 9075 / NRRL 31084 / PH-1) (Wheat head blight fungus) protein is AA9 family lytic polysaccharide monooxygenase A.